The following is a 312-amino-acid chain: MGVMAMLMLPLLLLGISGLLFIYQEVSRLWSKSAVQNKVVVITDAISGLGKECARVFHTGGARLVLCGKNWERLENLYDALISVADPSKQTFTPKLVLLDLSDISCVPDVAKEVLDCYGCVDILINNASVKVKGPAHKISLELDKKIMDANYFGPITLTKALLPNMISRRTGQIVLVNNIQGKFGIPFRTTYAASKHAALGFFDCLRAEVEEYDVVISTVSPTFIRSYHVYPEQGNWEASIWKFFFRKLTYGVHPVEVAEEVMRTVRRKKQEVFMANPIPKAAVYVRTFFPEFFFAVVACGVKEKLNVPEEG.

A signal peptide spans 1–18 (MGVMAMLMLPLLLLGISG). Residues Ser-47, Leu-49, Tyr-192, Lys-196, and Ser-227 each contribute to the NAD(+) site. The active-site Proton acceptor is the Tyr-192.

It belongs to the short-chain dehydrogenases/reductases (SDR) family.

It is found in the sarcoplasmic reticulum membrane. The catalysed reaction is all-trans-retinol + NAD(+) = all-trans-retinal + NADH + H(+). Its function is as follows. NADH-dependent oxidoreductase which catalyzes the oxidation of all-trans-retinol to all-trans-retinal. Plays a role in the regulation of cardiac and skeletal muscle metabolic functions. Maintains Ca(2+) intracellular homeostasis by repressing Ca(2+) release from the sarcoplasmic reticulum (SR) in myotubes, possibly through local alternations in NAD/NADH or retinol/retinal. Also plays a role in Ca(2+) homeostasis by controlling Ca(2+) overload in the cytosol and the SR in myotubes. Involved in glucose uptake into skeletal muscles and muscle performance by activating PI3K and mTORC2-mediated AKT1 phosphorylation signaling pathways, possibly through the action of its downstream catalytic product all-trans-retinoic acid. This is Dehydrogenase/reductase SDR family member 7C from Homo sapiens (Human).